The primary structure comprises 311 residues: Iron-binding protein YfeA (311 aa).

Positions 1–31 are cleaved as a signal peptide; it reads MIERLNSPFLRAAALFTIVAFSSLISTAALA. 4 residues coordinate Fe(2+): His-76, His-141, Glu-207, and Asp-282.

This sequence belongs to the bacterial solute-binding protein 9 family. In terms of assembly, monomer.

The protein resides in the periplasm. In terms of biological role, part of the ATP-binding cassette (ABC) transport system YfeABC involved in iron import. Binds iron with high affinity and specificity and delivers it to the membrane permease for translocation into the cytoplasm. Also binds Mn(2+) and Zn(2+). In Yersinia pestis, this protein is Iron-binding protein YfeA (yfeA).